Here is a 182-residue protein sequence, read N- to C-terminus: NAD(P)H-quinone oxidoreductase subunit I, chloroplastic (182 aa).

2 consecutive 4Fe-4S ferredoxin-type domains span residues 55 to 84 (GRIH…VDWK) and 95 to 124 (LNYS…MTEE). The [4Fe-4S] cluster site is built by Cys-64, Cys-67, Cys-70, Cys-74, Cys-104, Cys-107, Cys-110, and Cys-114.

The protein belongs to the complex I 23 kDa subunit family. In terms of assembly, NDH is composed of at least 16 different subunits, 5 of which are encoded in the nucleus. It depends on [4Fe-4S] cluster as a cofactor.

It is found in the plastid. It localises to the chloroplast thylakoid membrane. The catalysed reaction is a plastoquinone + NADH + (n+1) H(+)(in) = a plastoquinol + NAD(+) + n H(+)(out). It catalyses the reaction a plastoquinone + NADPH + (n+1) H(+)(in) = a plastoquinol + NADP(+) + n H(+)(out). Functionally, NDH shuttles electrons from NAD(P)H:plastoquinone, via FMN and iron-sulfur (Fe-S) centers, to quinones in the photosynthetic chain and possibly in a chloroplast respiratory chain. The immediate electron acceptor for the enzyme in this species is believed to be plastoquinone. Couples the redox reaction to proton translocation, and thus conserves the redox energy in a proton gradient. This chain is NAD(P)H-quinone oxidoreductase subunit I, chloroplastic, found in Buxus microphylla (Littleleaf boxwood).